A 405-amino-acid polypeptide reads, in one-letter code: 3-isopropylmalate dehydrogenase 2, chloroplastic (405 aa).

A chloroplast-targeting transit peptide spans 1–33; that stretch reads MAAALQTNIRTVKVPATFRAVSKQSLAPFRVRC. Ser-70 carries the phosphoserine modification. Position 114 to 129 (114 to 129) interacts with NAD(+); the sequence is IGGYKWDNNEKHLRPE. Residues Arg-136, Arg-146, and Arg-174 each coordinate substrate. Residue Asn-234 participates in NAD(+) binding. Asp-264 contributes to the substrate binding site. A Mg(2+)-binding site is contributed by Asp-264. Position 265 (Asn-265) interacts with NAD(+). Mg(2+) contacts are provided by Asp-288 and Asp-292. 318-334 is a binding site for NAD(+); that stretch reads EPIHGSAPDIAGQDKAN.

The protein belongs to the isocitrate and isopropylmalate dehydrogenases family. As to quaternary structure, homodimer. Mg(2+) serves as cofactor. It depends on Mn(2+) as a cofactor. In terms of tissue distribution, expressed at low levels in seedlings, cotyledons, hypocotyls, flowers, roots, pollen, leaves and stems.

It is found in the plastid. The protein localises to the chloroplast stroma. The enzyme catalyses (2R,3S)-3-isopropylmalate + NAD(+) = 4-methyl-2-oxopentanoate + CO2 + NADH. The protein operates within amino-acid biosynthesis; L-leucine biosynthesis; L-leucine from 3-methyl-2-oxobutanoate: step 3/4. With respect to regulation, regulated by a thiol-based redox modification. Involved in leucine biosynthesis; catalyzes the oxidative decarboxylation step in leucine biosynthesis (primary metabolism). Catalyzes the oxidation of 3-carboxy-2-hydroxy-4-methylpentanoate (3-isopropylmalate, 3-IPM) to 3-carboxy-4-methyl-2-oxopentanoate. The product decarboxylates to 4-methyl-2 oxopentanoate. Required during pollen development and involved in embryo sac development. In Arabidopsis thaliana (Mouse-ear cress), this protein is 3-isopropylmalate dehydrogenase 2, chloroplastic.